We begin with the raw amino-acid sequence, 301 residues long: GTPase Era (301 aa).

The 170-residue stretch at 11 to 180 folds into the Era-type G domain; that stretch reads RSGIITLVGR…KDVFFENCLN (170 aa). The G1 stretch occupies residues 19 to 26; it reads GRPNVGKS. 19–26 is a GTP binding site; that stretch reads GRPNVGKS. The tract at residues 45-49 is G2; sequence QTTRR. Residues 66–69 form a G3 region; it reads DTPG. GTP-binding positions include 66–70 and 129–132; these read DTPGI and TKID. Residues 129-132 are G4; it reads TKID. Residues 159–161 form a G5 region; the sequence is VSA. A KH type-2 domain is found at 210–286; the sequence is LEQEIPHSLL…YLRLIVKVVK (77 aa).

The protein belongs to the TRAFAC class TrmE-Era-EngA-EngB-Septin-like GTPase superfamily. Era GTPase family. As to quaternary structure, monomer.

The protein localises to the cytoplasm. It localises to the cell membrane. In terms of biological role, an essential GTPase that binds both GDP and GTP, with rapid nucleotide exchange. Plays a role in 16S rRNA processing and 30S ribosomal subunit biogenesis and possibly also in cell cycle regulation and energy metabolism. The protein is GTPase Era of Tropheryma whipplei (strain TW08/27) (Whipple's bacillus).